Consider the following 919-residue polypeptide: MATIAAAAFEALMDGVTCWDVPRGPIPSELLLIGEAAFPVMVNDKGQVLIAASSYGRGRLVVVSHEGYLSHTGLAPFLLNAVSWLCPCPGAPVGVHPSLAPLVNILQDAGLEAQVKPEPGEPLGVYCINAYNDTLTATLIQFVKHGGGLLIGGQAWYWASQHGPDKVLSRFPGNKVTSVAGVYFTDTYGDRDRFKVSKKVPKIPLHVRYGEDVRQDQQQLLEGISELDIRTGGVPSQLLVHGALAFPLGLDASLNCFLAAAHYGRGRVVLAAHECLLCAPKMGPFLLNAVRWLARGQTGKVGVNTNLKDLCPLLSEHGLQCSLEPHLNSDLCVYCCKAYSDKEAKQLQEFVAEGGGLLIGGQAWWWASQNPGHCPLAGFPGNIILNCFGLSILPQTLKAGCFPVPTPEMRSYHFRKALSQFQAILNHENGNLEKSCLAKLRVDGAAFLQIPAEGVPAYISLHRLLRKMLRGSGLPAVSRENPVASDSYEAAVLSLATGLAHSGTDCSQLAQGLGTWTCSSSLYPSKHPITVEINGINPGNNDCWVSTGLYLLEGQNAEVSLSEAAASAGLRVQIGCHTDDLTKARKLSRAPVVTHQCWMDRTERSVSCLWGGLLYVIVPKGSQLGPVPVTIRGAVPAPYYKLGKTSLEEWKRQMQENLAPWGELATDNIILTVPTTNLQALKDPEPVLRLWDEMMQAVARLAAEPFPFRRPERIVADVQISAGWMHSGYPIMCHLESVKEIINEMDMRSRGVWGPIHELGHNQQRHGWEFPPHTTEATCNLWSVYVHETVLGIPRAQAHEALSPPERERRIKAHLGKGAPLCDWNVWTALETYLQLQEAFGWEPFTQLFAEYQTLSHLPKDNTGRMNLWVKKFSEKVKKNLVPFFEAWGWPIQKEVADSLASLPEWQENPMQVYLRARK.

One can recognise a Peptidase M60 domain in the interval 542 to 841 (DCWVSTGLYL…TYLQLQEAFG (300 aa)).

This sequence belongs to the TCAF family. In terms of assembly, isoform 2 interacts with TRPM8 (via N-terminus and C-terminus domains); the interaction inhibits TRPM8 channel activity. Interacts with TRPV6. Isoform 2 is expressed in the prostate and in cancerous prostate samples.

Its subcellular location is the cell membrane. Functionally, negatively regulates the plasma membrane cation channel TRPM8 activity. Involved in the recruitment of TRPM8 to the cell surface. Promotes prostate cancer cell migration stimulation in a TRPM8-dependent manner. This is TRPM8 channel-associated factor 2 from Homo sapiens (Human).